We begin with the raw amino-acid sequence, 127 residues long: uncharacterized protein (127 aa).

This is an uncharacterized protein from Thermoproteus tenax (TTV1).